A 293-amino-acid polypeptide reads, in one-letter code: Pyridoxal 5'-phosphate synthase subunit PdxS (293 aa).

Residue D23 coordinates D-ribose 5-phosphate. Catalysis depends on K80, which acts as the Schiff-base intermediate with D-ribose 5-phosphate. Position 152 (G152) interacts with D-ribose 5-phosphate. D-glyceraldehyde 3-phosphate is bound at residue R164. Residues G213 and 234–235 (GS) each bind D-ribose 5-phosphate.

It belongs to the PdxS/SNZ family. In terms of assembly, in the presence of PdxT, forms a dodecamer of heterodimers.

The catalysed reaction is aldehydo-D-ribose 5-phosphate + D-glyceraldehyde 3-phosphate + L-glutamine = pyridoxal 5'-phosphate + L-glutamate + phosphate + 3 H2O + H(+). Its pathway is cofactor biosynthesis; pyridoxal 5'-phosphate biosynthesis. Its function is as follows. Catalyzes the formation of pyridoxal 5'-phosphate from ribose 5-phosphate (RBP), glyceraldehyde 3-phosphate (G3P) and ammonia. The ammonia is provided by the PdxT subunit. Can also use ribulose 5-phosphate and dihydroxyacetone phosphate as substrates, resulting from enzyme-catalyzed isomerization of RBP and G3P, respectively. The protein is Pyridoxal 5'-phosphate synthase subunit PdxS of Dehalococcoides mccartyi (strain ATCC BAA-2100 / JCM 16839 / KCTC 5957 / BAV1).